The primary structure comprises 194 residues: ATP-dependent Clp protease proteolytic subunit (194 aa).

The Nucleophile role is filled by Ser-99. The active site involves His-124.

This sequence belongs to the peptidase S14 family. As to quaternary structure, fourteen ClpP subunits assemble into 2 heptameric rings which stack back to back to give a disk-like structure with a central cavity, resembling the structure of eukaryotic proteasomes.

It is found in the cytoplasm. It catalyses the reaction Hydrolysis of proteins to small peptides in the presence of ATP and magnesium. alpha-casein is the usual test substrate. In the absence of ATP, only oligopeptides shorter than five residues are hydrolyzed (such as succinyl-Leu-Tyr-|-NHMec, and Leu-Tyr-Leu-|-Tyr-Trp, in which cleavage of the -Tyr-|-Leu- and -Tyr-|-Trp bonds also occurs).. Cleaves peptides in various proteins in a process that requires ATP hydrolysis. Has a chymotrypsin-like activity. Plays a major role in the degradation of misfolded proteins. This is ATP-dependent Clp protease proteolytic subunit from Borrelia garinii subsp. bavariensis (strain ATCC BAA-2496 / DSM 23469 / PBi) (Borreliella bavariensis).